The sequence spans 521 residues: C-22 sterol desaturase erg5 (521 aa).

The chain crosses the membrane as a helical span at residues 30-50; that stretch reads AVLNGFTFWKALATLFFAAVI.

It belongs to the cytochrome P450 family. The cofactor is heme.

It localises to the endoplasmic reticulum membrane. The enzyme catalyses 5-dehydroepisterol + NADPH + O2 + H(+) = ergosta-5,7,22,24(28)-tetraen-3beta-ol + NADP(+) + 2 H2O. The protein operates within steroid metabolism; ergosterol biosynthesis. C-22 sterol desaturase; part of the third module of ergosterol biosynthesis pathway that includes the late steps of the pathway. Erg5 converts 5-dehydroepisterol into ergosta-5,7,22,24(28)-tetraen-3beta-ol by forming the C-22(23) double bond in the sterol side chain. The third module or late pathway involves the ergosterol synthesis itself through consecutive reactions that mainly occur in the endoplasmic reticulum (ER) membrane. Firstly, the squalene synthase erg9 catalyzes the condensation of 2 farnesyl pyrophosphate moieties to form squalene, which is the precursor of all steroids. Squalene synthase is crucial for balancing the incorporation of farnesyl diphosphate (FPP) into sterol and nonsterol isoprene synthesis. Secondly, squalene is converted into lanosterol by the consecutive action of the squalene epoxidase erg1 and the lanosterol synthase erg7. Then, the delta(24)-sterol C-methyltransferase erg6 methylates lanosterol at C-24 to produce eburicol. Eburicol is the substrate of the sterol 14-alpha demethylase encoded by cyp51A and cyp51B, to yield 4,4,24-trimethyl ergosta-8,14,24(28)-trienol. The C-14 reductase erg24 then reduces the C14=C15 double bond which leads to 4,4-dimethylfecosterol. A sequence of further demethylations at C-4, involving the C-4 demethylation complex containing the C-4 methylsterol oxidases erg25A or erg25B, the sterol-4-alpha-carboxylate 3-dehydrogenase erg26 and the 3-keto-steroid reductase erg27, leads to the production of fecosterol via 4-methylfecosterol. The C-8 sterol isomerase erg2 then catalyzes the reaction which results in unsaturation at C-7 in the B ring of sterols and thus converts fecosterol to episterol. The sterol-C5-desaturase erg3B then catalyzes the introduction of a C-5 double bond in the B ring to produce 5-dehydroepisterol. The 2 other sterol-C5-desaturases, erg3A and erg3C, seem to be less important in ergosterol biosynthesis. The C-22 sterol desaturase erg5 further converts 5-dehydroepisterol into ergosta-5,7,22,24(28)-tetraen-3beta-ol by forming the C-22(23) double bond in the sterol side chain. Finally, ergosta-5,7,22,24(28)-tetraen-3beta-ol is substrate of the C-24(28) sterol reductases erg4A and erg4B to produce ergosterol. Possible alternative sterol biosynthetic pathways might exist from fecosterol to ergosterol, depending on the activities of the erg3 isoforms. The protein is C-22 sterol desaturase erg5 of Aspergillus fumigatus (strain ATCC MYA-4609 / CBS 101355 / FGSC A1100 / Af293) (Neosartorya fumigata).